A 446-amino-acid polypeptide reads, in one-letter code: tRNA modification GTPase MnmE (446 aa).

Residues Arg22, Glu80, and Lys119 each coordinate (6S)-5-formyl-5,6,7,8-tetrahydrofolate. The 156-residue stretch at Gly215–Gly370 folds into the TrmE-type G domain. Residue Asn225 participates in K(+) binding. GTP is bound by residues Asn225–Thr230, Thr244–Thr250, and Asp269–Gly272. Ser229 lines the Mg(2+) pocket. Residues Thr244, Ile246, and Thr249 each contribute to the K(+) site. Thr250 is a Mg(2+) binding site. Lys446 is a binding site for (6S)-5-formyl-5,6,7,8-tetrahydrofolate.

The protein belongs to the TRAFAC class TrmE-Era-EngA-EngB-Septin-like GTPase superfamily. TrmE GTPase family. In terms of assembly, homodimer. Heterotetramer of two MnmE and two MnmG subunits. K(+) is required as a cofactor.

Its subcellular location is the cytoplasm. Functionally, exhibits a very high intrinsic GTPase hydrolysis rate. Involved in the addition of a carboxymethylaminomethyl (cmnm) group at the wobble position (U34) of certain tRNAs, forming tRNA-cmnm(5)s(2)U34. The sequence is that of tRNA modification GTPase MnmE from Legionella pneumophila (strain Corby).